A 145-amino-acid chain; its full sequence is Putative nickel-responsive regulator (145 aa).

Ni(2+)-binding residues include His-77, His-88, His-90, and Cys-96.

It belongs to the transcriptional regulatory CopG/NikR family. Ni(2+) is required as a cofactor.

Transcriptional regulator. The sequence is that of Putative nickel-responsive regulator from Rhizobium rhizogenes (strain K84 / ATCC BAA-868) (Agrobacterium radiobacter).